Reading from the N-terminus, the 619-residue chain is Genetic interactor of prohibitins 3, mitochondrial (619 aa).

The transit peptide at 1-55 (MLKAQIQTGLQLLQRAAVSHMRPSSCTSMLMRMRVHLAPRALQSQRSLSSSEFSP) directs the protein to the mitochondrion. Residues 162–372 (VAAVSDVMHS…IYDVPGFSSA (211 aa)) form the CP-type G domain.

It belongs to the TRAFAC class YlqF/YawG GTPase family. GEP3 subfamily.

It is found in the mitochondrion. Functionally, may be involved in the mitochondrial lipid metabolism. This chain is Genetic interactor of prohibitins 3, mitochondrial (GEP3), found in Clavispora lusitaniae (strain ATCC 42720) (Yeast).